Reading from the N-terminus, the 288-residue chain is Type II restriction enzyme DpnII (288 aa).

Belongs to the DpnII type II restriction endonuclease family. Homodimer.

The catalysed reaction is Endonucleolytic cleavage of DNA to give specific double-stranded fragments with terminal 5'-phosphates.. In terms of biological role, a P subtype restriction enzyme that recognizes the double-stranded unmethylated sequence 5'-GATC-3' and cleaves before G-1. The polypeptide is Type II restriction enzyme DpnII (Streptococcus pneumoniae).